The primary structure comprises 219 residues: MDAEFWLERWRDGRTHFHQQRVTPLLAKYWPTLQLPPGCRVLVPLCGKTLDMVWLAQQGHQVLGVELSSLAVEQFFAENGLQATVREAGPGTYYSAGDISIYCGDIFDLGADVLGDCVGAFDRAALVALPAAMRPRYARHVYGQLSAAYRGLLITLDYDQSQMDGPPFSVRDDEVQAIYAGHSEAVLIDRRDILSKEPKFAERGLTQLDTLVYRLQRQG.

Positions 10, 45, 66, and 123 each coordinate S-adenosyl-L-methionine.

Belongs to the class I-like SAM-binding methyltransferase superfamily. TPMT family.

The protein localises to the cytoplasm. The catalysed reaction is S-adenosyl-L-methionine + a thiopurine = S-adenosyl-L-homocysteine + a thiopurine S-methylether.. The sequence is that of Thiopurine S-methyltransferase from Bordetella petrii (strain ATCC BAA-461 / DSM 12804 / CCUG 43448).